Consider the following 78-residue polypeptide: Large ribosomal subunit protein bL28 (78 aa).

It belongs to the bacterial ribosomal protein bL28 family.

The protein is Large ribosomal subunit protein bL28 of Pectobacterium carotovorum subsp. carotovorum (strain PC1).